We begin with the raw amino-acid sequence, 159 residues long: Small ribosomal subunit protein uS7c (159 aa).

It belongs to the universal ribosomal protein uS7 family. As to quaternary structure, part of the 30S ribosomal subunit.

It localises to the plastid. Its subcellular location is the chloroplast. One of the primary rRNA binding proteins, it binds directly to 16S rRNA where it nucleates assembly of the head domain of the 30S subunit. The protein is Small ribosomal subunit protein uS7c (rps7) of Bigelowiella natans (Pedinomonas minutissima).